The sequence spans 120 residues: Large ribosomal subunit protein uL18 (120 aa).

Residues M1 to Q10 are compositionally biased toward basic and acidic residues. Positions M1–E25 are disordered.

It belongs to the universal ribosomal protein uL18 family. In terms of assembly, part of the 50S ribosomal subunit; part of the 5S rRNA/L5/L18/L25 subcomplex. Contacts the 5S and 23S rRNAs.

In terms of biological role, this is one of the proteins that bind and probably mediate the attachment of the 5S RNA into the large ribosomal subunit, where it forms part of the central protuberance. In Synechococcus sp. (strain RCC307), this protein is Large ribosomal subunit protein uL18.